The chain runs to 310 residues: Dehydrodolichyl diphosphate synthase 2 (310 aa).

Belongs to the UPP synthase family. Requires Mg(2+) as cofactor.

The protein operates within protein modification; protein glycosylation. Functionally, catalyzes cis-prenyl chain elongation to produce the polyprenyl backbone of dolichol, a glycosyl carrier-lipid required for the biosynthesis of several classes of glycoprotein. The chain is Dehydrodolichyl diphosphate synthase 2 from Arabidopsis thaliana (Mouse-ear cress).